Consider the following 473-residue polypeptide: tRNA modification GTPase MnmE (473 aa).

Residues Arg-30, Glu-95, and Arg-134 each coordinate (6S)-5-formyl-5,6,7,8-tetrahydrofolate. Residues 230–394 (GVSTVIAGRP…LKLLMASMVE (165 aa)) enclose the TrmE-type G domain. GTP-binding positions include 240–245 (NAGKST), 259–265 (SHMPGTT), and 284–287 (DTAG). Mg(2+) is bound by residues Ser-244 and Thr-265. (6S)-5-formyl-5,6,7,8-tetrahydrofolate is bound at residue Lys-473.

This sequence belongs to the TRAFAC class TrmE-Era-EngA-EngB-Septin-like GTPase superfamily. TrmE GTPase family. In terms of assembly, homodimer. Heterotetramer of two MnmE and two MnmG subunits. K(+) is required as a cofactor.

The protein resides in the cytoplasm. In terms of biological role, exhibits a very high intrinsic GTPase hydrolysis rate. Involved in the addition of a carboxymethylaminomethyl (cmnm) group at the wobble position (U34) of certain tRNAs, forming tRNA-cmnm(5)s(2)U34. The chain is tRNA modification GTPase MnmE from Chlorobium luteolum (strain DSM 273 / BCRC 81028 / 2530) (Pelodictyon luteolum).